We begin with the raw amino-acid sequence, 216 residues long: MSFLNRNLSRTIKAAVRGKHTLPKLPYDYGALAPIISKDILEVHHGKHHQTYVNNLNAVEEQMTEAHSKKDVNKVVELSKNYAFNWGGHLNHSIYWQNLSPTKSEPSADLKKAIEEQFSSFEQFKKDLSALSIGVQGSGWGWLGYNKKXKKLQILAVSNQEPLQAVTGLVPLFAIDVWEHAYYLQXKNXXAKYVEAXWDIANWKBISDRYAEATCN.

Residues 1–18 (MSFLNRNLSRTIKAAVRG) constitute a mitochondrion transit peptide. Mn(2+)-binding residues include His-44, His-92, Asp-176, and His-180.

This sequence belongs to the iron/manganese superoxide dismutase family. Mn(2+) serves as cofactor.

It is found in the mitochondrion matrix. It catalyses the reaction 2 superoxide + 2 H(+) = H2O2 + O2. In terms of biological role, destroys superoxide anion radicals which are normally produced within the cells and which are toxic to biological systems. The sequence is that of Superoxide dismutase [Mn], mitochondrial (Sod2) from Glossina morsitans morsitans (Savannah tsetse fly).